We begin with the raw amino-acid sequence, 168 residues long: Photosystem I assembly protein Ycf3 (168 aa).

TPR repeat units follow at residues Ala-35–Pro-68, Ser-72–Leu-105, and Gly-120–Asn-153.

The protein belongs to the Ycf3 family.

The protein localises to the plastid membrane. Its function is as follows. Essential for the assembly of the photosystem I (PSI) complex. May act as a chaperone-like factor to guide the assembly of the PSI subunits. The sequence is that of Photosystem I assembly protein Ycf3 from Cuscuta exaltata (Tall dodder).